We begin with the raw amino-acid sequence, 641 residues long: White-opaque regulator 3 (641 aa).

The segment covering 13–27 (ANVNHQQLSQDTNSI) has biased composition (polar residues). 3 disordered regions span residues 13-38 (ANVNHQQLSQDTNSIPQQQLQQQQQP), 146-245 (QLAS…PMTR), and 258-287 (PIIYPKSSNSTNGNNSNGQNSSSIPPPEPR). Composition is skewed to low complexity over residues 28–38 (PQQQLQQQQQP) and 151–160 (QNQDQNQSQN). The span at 161–172 (RYEQSSMTSIHT) shows a compositional bias: polar residues. Residues 173–184 (NDNSSSVNNSPN) show a composition bias toward low complexity. Residues 193-204 (STFQPQHSNEGS) are compositionally biased toward polar residues. Low complexity-rich tracts occupy residues 216–242 (QQQQQPQQQQQPQQQQQPQQQQQPQQP) and 264–280 (SSNSTNGNNSNGQNSSS). The segment at 317–337 (CRRCGSEIPLAERRFVLCPSC) adopts a dksA C4-type zinc-finger fold. Disordered stretches follow at residues 366-409 (LSKE…KVCQ), 480-507 (MSHQYIQPPPPPPPPLMTGHHQFQPQPH), 522-550 (NSGVAGIQQPNNGMVVGDQQQQQQQHNGS), and 568-641 (LQLQ…YPNN). Residues 379–400 (QNNKSNEDQNNESRRGSQEKPA) show a composition bias toward basic and acidic residues. Residues 486–495 (QPPPPPPPPL) show a composition bias toward pro residues. Positions 522–533 (NSGVAGIQQPNN) are enriched in polar residues. The span at 569–579 (QLQQQQQQQQQ) shows a compositional bias: low complexity. Residues 597 to 606 (SFPPPPPPPL) are compositionally biased toward pro residues. Over residues 610–641 (QHQGLQQYSHAQQQQQQQHQQQQPYHQEYPNN) the composition is skewed to low complexity.

It localises to the nucleus. Functionally, transcription factor that modulates the white-opaque switch. The protein is White-opaque regulator 3 (WOR3) of Candida albicans (strain SC5314 / ATCC MYA-2876) (Yeast).